A 181-amino-acid polypeptide reads, in one-letter code: Transcription termination/antitermination protein NusG (181 aa).

Positions 130 to 161 constitute a KOW domain; sequence PGEMVRVNDGPFADFNGVVEEVDYEKSRLKVS.

It belongs to the NusG family. Monomer. Interacts with the transcription termination factor Rho and with RNA polymerase.

In terms of biological role, participates in transcription elongation, termination and antitermination. In the absence of Rho, increases the rate of transcription elongation by the RNA polymerase (RNAP), probably by partially suppressing pausing. In the presence of Rho, modulates most Rho-dependent termination events by interacting with the RNAP to render the complex more susceptible to the termination activity of Rho. May be required to overcome a kinetic limitation of Rho to function at certain terminators. Also involved in ribosomal RNA transcriptional antitermination. This chain is Transcription termination/antitermination protein NusG, found in Salmonella typhi.